The primary structure comprises 467 residues: Acid phosphatase PHO11 (467 aa).

The signal sequence occupies residues 1–17 (MLKSAVYSILAASLVNA). His75 serves as the catalytic Nucleophile. Asn97, Asn162, Asn192, Asn250, and Asn315 each carry an N-linked (GlcNAc...) asparagine glycan. The active-site Proton donor is the Asp338. 5 N-linked (GlcNAc...) asparagine glycosylation sites follow: Asn356, Asn390, Asn439, Asn445, and Asn461.

This sequence belongs to the histidine acid phosphatase family. In terms of processing, glycosylated during secretion across the membrane.

It carries out the reaction a phosphate monoester + H2O = an alcohol + phosphate. In Saccharomyces cerevisiae (strain ATCC 204508 / S288c) (Baker's yeast), this protein is Acid phosphatase PHO11 (PHO11).